The chain runs to 330 residues: D-lactate dehydrogenase (330 aa).

NAD(+)-binding positions include 155–156 (RI), Asp-175, 206–207 (MP), Asn-212, 233–235 (MAR), and Asp-259. Arg-235 is a catalytic residue. Glu-264 is an active-site residue. His-296 (proton donor) is an active-site residue.

The protein belongs to the D-isomer specific 2-hydroxyacid dehydrogenase family.

It carries out the reaction (R)-lactate + NAD(+) = pyruvate + NADH + H(+). The polypeptide is D-lactate dehydrogenase (ldhD) (Streptococcus agalactiae serotype III (strain NEM316)).